The chain runs to 599 residues: MKLLKLTGFIFFLFFLTESLTLPTQPRDIENFNSTQKFIEDNIEYITIIAFAQYVQEATFEEMEKLVKDMVEYKDRCMADKTLPECSKLPNNVLQEKICAMEGLPQKHNFSHCCSKVDAQRRLCFFYNKKSDVGFLPPFPTLDPEEKCQAYESNRESLLNHFLYEVARRNPFVFAPTLLTVAVHFEEVAKSCCEEQNKVNCLQTRAIPVTQYLKAFSSYQKHVCGALLKFGTKVVHFIYIAILSQKFPKIEFKELISLVEDVSSNYDGCCEGDVVQCIRDTSKVMNHICSKQDSISSKIKECCEKKIPERGQCIINSNKDDRPKDLSLREGKFTDSENVCQERDADPDTFFAKFTFEYSRRHPDLSIPELLRIVQIYKDLLRNCCNTENPPGCYRYAEDKFNETTEKSLKMVQQECKHFQNLGKDGLKYHYLIRLTKIAPQLSTEELVSLGEKMVTAFTTCCTLSEEFACVDNLADLVFGELCGVNENRTINPAVDHCCKTNFAFRRPCFESLKADKTYVPPPFSQDLFTFHADMCQSQNEELQRKTDRFLVNLVKLKHELTDEELQSLFTNFANVVDKCCKAESPEVCFNEESPKIGN.

An N-terminal signal peptide occupies residues 1 to 21; sequence MKLLKLTGFIFFLFFLTESLT. Albumin domains follow at residues 22–210, 211–403, and 404–599; these read LPTQ…IPVT, QYLK…KFNE, and TTEK…KIGN. N33 carries an N-linked (GlcNAc...) (complex) asparagine glycan. Intrachain disulfides connect C77-C86, C99-C114, C113-C124, C148-C193, C192-C201, C224-C270, C269-C277, C289-C303, C302-C313, C340-C385, and C384-C393. N109 carries an N-linked (GlcNAc...) (complex) asparagine glycan. The interval 215 to 319 is binding pocket for hydrophobic ligands; that stretch reads AFSSYQKHVC…RGQCIINSNK (105 aa). An N-linked (GlcNAc...) (complex) asparagine; atypical glycan is attached at N383. The N-linked (GlcNAc...) (complex) asparagine glycan is linked to N402. Cystine bridges form between C416–C462, C461–C470, C483–C499, C498–C509, C536–C581, and C580–C589. A glycan (N-linked (GlcNAc...) asparagine) is linked at N488.

Belongs to the ALB/AFP/VDB family. In terms of assembly, forms a 1:1 complex with Wnt family members; interacts with WNT1, WNT2B, WNT3, WNT3A, WNT5A, WNT7A, WNT7B, WNT8, WNT9A, WNT9B, WNT10A and WNT10B. In terms of processing, N-glycosylated; more than 90% of the glycans are sialylated. In terms of tissue distribution, high level detected in plasma but also in extravascular fluids such as follicular and cerebrospinal fluids (at protein level).

It is found in the secreted. Its function is as follows. Functions as a carrier for hydrophobic molecules in body fluids. Essential for the solubility and activity of lipidated Wnt family members, including WNT1, WNT2B, WNT3, WNT3A, WNT5A, WNT7A, WNT7B, WNT8, WNT9A, WNT9B, WNT10A and WNT10B. Binds vitamin E. May transport vitamin E in body fluids under conditions where the lipoprotein system is not sufficient. May be involved in the transport of vitamin E across the blood-brain barrier. The polypeptide is Afamin (AFM) (Homo sapiens (Human)).